We begin with the raw amino-acid sequence, 276 residues long: Release factor glutamine methyltransferase (276 aa).

S-adenosyl-L-methionine-binding positions include 117-121 (GTGTG), Asp140, Trp168, and Asn182. Residue 182–185 (NPPY) participates in substrate binding.

The protein belongs to the protein N5-glutamine methyltransferase family. PrmC subfamily.

The enzyme catalyses L-glutaminyl-[peptide chain release factor] + S-adenosyl-L-methionine = N(5)-methyl-L-glutaminyl-[peptide chain release factor] + S-adenosyl-L-homocysteine + H(+). In terms of biological role, methylates the class 1 translation termination release factors RF1/PrfA and RF2/PrfB on the glutamine residue of the universally conserved GGQ motif. In Yersinia pestis, this protein is Release factor glutamine methyltransferase.